The primary structure comprises 220 residues: Deoxyribose-phosphate aldolase 1 (220 aa).

The active-site Proton donor/acceptor is the Asp-89. Catalysis depends on Lys-151, which acts as the Schiff-base intermediate with acetaldehyde. The active-site Proton donor/acceptor is Lys-180.

It belongs to the DeoC/FbaB aldolase family. DeoC type 1 subfamily.

Its subcellular location is the cytoplasm. It catalyses the reaction 2-deoxy-D-ribose 5-phosphate = D-glyceraldehyde 3-phosphate + acetaldehyde. It participates in carbohydrate degradation; 2-deoxy-D-ribose 1-phosphate degradation; D-glyceraldehyde 3-phosphate and acetaldehyde from 2-deoxy-alpha-D-ribose 1-phosphate: step 2/2. Functionally, catalyzes a reversible aldol reaction between acetaldehyde and D-glyceraldehyde 3-phosphate to generate 2-deoxy-D-ribose 5-phosphate. This Staphylococcus aureus (strain COL) protein is Deoxyribose-phosphate aldolase 1.